The chain runs to 28 residues: Mu-theraphotoxin-Hsp1a (28 aa).

3 disulfides stabilise this stretch: cysteine 2–cysteine 16, cysteine 9–cysteine 21, and cysteine 15–cysteine 25. Asparagine amide is present on asparagine 28.

It belongs to the neurotoxin 30 (phrixotoxin) family. As to expression, expressed by the venom gland.

It localises to the secreted. Its function is as follows. Potent and selective inhibitor of Nav1.7/SCN9A sodium channels. Inhibits Nav1.7/SCN9A peak current (IC(50)=13 nM). In vivo, does not induce visible signs of toxicity when intravenously injected into mice. This Homoeomma sp. (Peruvian tarantula) protein is Mu-theraphotoxin-Hsp1a.